The following is a 729-amino-acid chain: Fibroblast growth factor receptor 2 (729 aa).

The first 21 residues, 1–21 (MFSWSYLMGLVMVATATLSLA), serve as a signal peptide directing secretion. Residues 22 to 285 (RPSYNIAEDT…ELDSSSEYTE (264 aa)) lie on the Extracellular side of the membrane. The segment at 29-62 (EDTTLEPEDANSSGDDEDDNDGSEDFTNDNNHMR) is disordered. The segment covering 31-55 (TTLEPEDANSSGDDEDDNDGSEDFT) has biased composition (acidic residues). A glycan (N-linked (GlcNAc...) asparagine) is linked at asparagine 39. 2 Ig-like C2-type domains span residues 64 to 157 (PYWT…YHLD) and 166 to 268 (PILQ…AWLT). The heparin-binding stretch occupies residues 71–88 (KLEKKLHAVPAANTVKFR). The cysteines at positions 89 and 141 are disulfide-linked. N-linked (GlcNAc...) asparagine glycans are attached at residues asparagine 138, asparagine 151, asparagine 175, asparagine 207, asparagine 228, asparagine 241, and asparagine 256. The cysteines at positions 188 and 252 are disulfide-linked. The chain crosses the membrane as a helical span at residues 286–306 (IAIYCVGGFLITCMIGTIMVC). At 307 to 729 (HMKGRGKKSD…SQHTNGTIKT (423 aa)) the chain is on the cytoplasmic side. Residue tyrosine 374 is modified to Phosphotyrosine; by autocatalysis. The region spanning 389–678 (LTLGKPLGEG…LTQTTNEEYL (290 aa)) is the Protein kinase domain. Residues 395–403 (LGEGCFGQV), lysine 425, 473–475 (EYA), and asparagine 479 each bind ATP. Tyrosine 494 carries the phosphotyrosine; by autocatalysis modification. The active-site Proton acceptor is aspartate 534. Tyrosine 564, tyrosine 565, and tyrosine 677 each carry phosphotyrosine; by autocatalysis. The segment at 683–729 (PLEQYSPSYPDTRSSCSSGDDSVFSPDAMPYDPCLPKSQHTNGTIKT) is disordered. Positions 693 to 707 (DTRSSCSSGDDSVFS) are enriched in low complexity. Residues 720 to 729 (SQHTNGTIKT) are compositionally biased toward polar residues.

This sequence belongs to the protein kinase superfamily. Tyr protein kinase family. Fibroblast growth factor receptor subfamily. As to quaternary structure, monomer. Homodimer after ligand binding. In terms of processing, autophosphorylated. Binding of FGF family members together with heparan sulfate proteoglycan or heparin promotes receptor dimerization and autophosphorylation on tyrosine residues. Autophosphorylation occurs in trans between the two FGFR molecules present in the dimer. Post-translationally, N-glycosylated in the endoplasmic reticulum. The N-glycan chains undergo further maturation to an Endo H-resistant form in the Golgi apparatus. Ubiquitinated. FGFR2 is rapidly ubiquitinated after autophosphorylation, leading to internalization and degradation. Subject to degradation both in lysosomes and by the proteasome.

The protein localises to the cell membrane. The protein resides in the golgi apparatus. It localises to the cytoplasmic vesicle. It carries out the reaction L-tyrosyl-[protein] + ATP = O-phospho-L-tyrosyl-[protein] + ADP + H(+). Present in an inactive conformation in the absence of bound ligand. Ligand binding leads to dimerization and activation by autophosphorylation on tyrosine residues. Its function is as follows. Tyrosine-protein kinase that acts as a cell-surface receptor for fibroblast growth factors and plays an essential role in the regulation of cell proliferation, differentiation, migration and apoptosis, and in the regulation of embryonic development. Required for normal embryonic patterning, limb bud development, lung morphogenesis, osteogenesis and skin development. Plays an essential role in the regulation of osteoblast differentiation, proliferation and apoptosis, and is required for normal skeleton development. Promotes cell proliferation in keratinocytes and immature osteoblasts, but promotes apoptosis in differentiated osteoblasts. Phosphorylates PLCG1, FRS2 and PAK4. Ligand binding leads to the activation of several signaling cascades. Activation of PLCG1 leads to the production of the cellular signaling molecules diacylglycerol and inositol 1,4,5-trisphosphate. Phosphorylation of FRS2 triggers recruitment of GRB2, GAB1, PIK3R1 and SOS1, and mediates activation of RAS, MAPK1/ERK2, MAPK3/ERK1 and the MAP kinase signaling pathway, as well as of the AKT1 signaling pathway. FGFR2 signaling is down-regulated by ubiquitination, internalization and degradation. Mutations that lead to constitutive kinase activation or impair normal FGFR2 maturation, internalization and degradation lead to aberrant signaling. Over-expressed FGFR2 promotes activation of STAT1. The chain is Fibroblast growth factor receptor 2 (FGFR2) from Notophthalmus viridescens (Eastern newt).